A 293-amino-acid polypeptide reads, in one-letter code: UPF0282 protein MK0213 (293 aa).

This sequence belongs to the UPF0282 family.

This chain is UPF0282 protein MK0213, found in Methanopyrus kandleri (strain AV19 / DSM 6324 / JCM 9639 / NBRC 100938).